The sequence spans 395 residues: Argininosuccinate synthase (395 aa).

7–15 provides a ligand contact to ATP; the sequence is LYSGGLDTS. Residue Tyr-83 participates in L-citrulline binding. Residue Gly-113 participates in ATP binding. Thr-115, Asn-119, and Asp-120 together coordinate L-aspartate. An L-citrulline-binding site is contributed by Asn-119. L-citrulline-binding residues include Arg-123, Ser-169, Ser-178, Glu-253, and Tyr-265.

This sequence belongs to the argininosuccinate synthase family. Type 1 subfamily. Homotetramer.

It is found in the cytoplasm. The enzyme catalyses L-citrulline + L-aspartate + ATP = 2-(N(omega)-L-arginino)succinate + AMP + diphosphate + H(+). It participates in amino-acid biosynthesis; L-arginine biosynthesis; L-arginine from L-ornithine and carbamoyl phosphate: step 2/3. The polypeptide is Argininosuccinate synthase (Picrophilus torridus (strain ATCC 700027 / DSM 9790 / JCM 10055 / NBRC 100828 / KAW 2/3)).